Consider the following 393-residue polypeptide: Acetate kinase (393 aa).

Asn-6 serves as a coordination point for Mg(2+). Lys-13 contacts ATP. Arg-87 provides a ligand contact to substrate. The active-site Proton donor/acceptor is the Asp-143. Residues 203–207 (HLGNG), 278–280 (DMR), and 326–330 (GIGEN) each bind ATP. Glu-380 contacts Mg(2+).

The protein belongs to the acetokinase family. In terms of assembly, homodimer. Requires Mg(2+) as cofactor. Mn(2+) is required as a cofactor.

It is found in the cytoplasm. It catalyses the reaction acetate + ATP = acetyl phosphate + ADP. The protein operates within metabolic intermediate biosynthesis; acetyl-CoA biosynthesis; acetyl-CoA from acetate: step 1/2. Catalyzes the formation of acetyl phosphate from acetate and ATP. Can also catalyze the reverse reaction. The protein is Acetate kinase of Mycoplasma capricolum subsp. capricolum (strain California kid / ATCC 27343 / NCTC 10154).